A 183-amino-acid polypeptide reads, in one-letter code: Ribosome-recycling factor (183 aa).

It belongs to the RRF family.

The protein resides in the cytoplasm. In terms of biological role, responsible for the release of ribosomes from messenger RNA at the termination of protein biosynthesis. May increase the efficiency of translation by recycling ribosomes from one round of translation to another. The protein is Ribosome-recycling factor of Afipia carboxidovorans (strain ATCC 49405 / DSM 1227 / KCTC 32145 / OM5) (Oligotropha carboxidovorans).